The following is a 284-amino-acid chain: Bifunctional protein FolD (284 aa).

Residues 165 to 167 (GRS) and Ser-190 each bind NADP(+).

It belongs to the tetrahydrofolate dehydrogenase/cyclohydrolase family. As to quaternary structure, homodimer.

The enzyme catalyses (6R)-5,10-methylene-5,6,7,8-tetrahydrofolate + NADP(+) = (6R)-5,10-methenyltetrahydrofolate + NADPH. It catalyses the reaction (6R)-5,10-methenyltetrahydrofolate + H2O = (6R)-10-formyltetrahydrofolate + H(+). The protein operates within one-carbon metabolism; tetrahydrofolate interconversion. In terms of biological role, catalyzes the oxidation of 5,10-methylenetetrahydrofolate to 5,10-methenyltetrahydrofolate and then the hydrolysis of 5,10-methenyltetrahydrofolate to 10-formyltetrahydrofolate. In Streptococcus equi subsp. zooepidemicus (strain MGCS10565), this protein is Bifunctional protein FolD.